The sequence spans 273 residues: Orotidine 5'-phosphate decarboxylase (273 aa).

Lys96 serves as the catalytic Proton donor.

Belongs to the OMP decarboxylase family. Type 2 subfamily.

It catalyses the reaction orotidine 5'-phosphate + H(+) = UMP + CO2. It functions in the pathway pyrimidine metabolism; UMP biosynthesis via de novo pathway; UMP from orotate: step 2/2. This is Orotidine 5'-phosphate decarboxylase from Flavobacterium johnsoniae (strain ATCC 17061 / DSM 2064 / JCM 8514 / BCRC 14874 / CCUG 350202 / NBRC 14942 / NCIMB 11054 / UW101) (Cytophaga johnsonae).